The chain runs to 278 residues: Prohibitin-7, mitochondrial (278 aa).

Residues 1-14 (MNVKKVPNVPGSPA) are Mitochondrial matrix-facing. The helical; Signal-anchor for type II membrane protein transmembrane segment at 15-37 (LSALLKLGVIGGLGLYCIGSSMY) threads the bilayer. Topologically, residues 38–278 (NVDGGHRAIV…NSSDLLISKQ (241 aa)) are mitochondrial intermembrane. Positions 186-220 (KEFTEAIEKKQVAAQEAERAKFIVEKAEQDKKSAI) form a coiled coil.

Belongs to the prohibitin family. In terms of assembly, component of a prohibitin multimeric complex in mitochondrial membranes.

It localises to the mitochondrion inner membrane. Its function is as follows. Prohibitin probably acts as a holdase/unfoldase for the stabilization of newly synthesized mitochondrial proteins. This chain is Prohibitin-7, mitochondrial (PHB7), found in Arabidopsis thaliana (Mouse-ear cress).